The following is a 1315-amino-acid chain: Serine/threonine-protein kinase 36 (1315 aa).

Positions 4–254 (YHVLEMIGEG…WPDLLYHPFI (251 aa)) constitute a Protein kinase domain. Residues 10 to 18 (IGEGSFGRV) and Lys33 each bind ATP. Residue Asp125 is the Proton acceptor of the active site. 2 disordered regions span residues 312–345 (EAMQ…PRLG) and 365–405 (SWAE…RSTD). Basic and acidic residues predominate over residues 379 to 397 (RENRTTPDCERAFPEERPE).

It belongs to the protein kinase superfamily. Ser/Thr protein kinase family. As to quaternary structure, interacts with SPAG16 and KIF27. The cofactor is Mg(2+).

The protein resides in the cytoplasm. It is found in the nucleus. The protein localises to the cytoskeleton. It localises to the cilium axoneme. The enzyme catalyses L-seryl-[protein] + ATP = O-phospho-L-seryl-[protein] + ADP + H(+). It catalyses the reaction L-threonyl-[protein] + ATP = O-phospho-L-threonyl-[protein] + ADP + H(+). Its function is as follows. Serine/threonine protein kinase which plays an important role in the sonic hedgehog (Shh) pathway by regulating the activity of GLI transcription factors. Controls the activity of the transcriptional regulators GLI1, GLI2 and GLI3 by opposing the effect of SUFU and promoting their nuclear localization. GLI2 requires an additional function of STK36 to become transcriptionally active, but the enzyme does not need to possess an active kinase catalytic site for this to occur. Required for postnatal development, possibly by regulating the homeostasis of cerebral spinal fluid or ciliary function. Essential for construction of the central pair apparatus of motile cilia. In Pongo abelii (Sumatran orangutan), this protein is Serine/threonine-protein kinase 36.